The primary structure comprises 610 residues: T-cell immunomodulatory protein (610 aa).

The signal sequence occupies residues Met-1 to Ala-32. 7 N-linked (GlcNAc...) asparagine glycosylation sites follow: Asn-35, Asn-123, Asn-138, Asn-145, Asn-150, Asn-175, and Asn-241. The stretch at Leu-98 to Trp-135 is one FG-GAP 1; atypical repeat. One copy of the FG-GAP 2; atypical repeat lies at Phe-153 to Leu-183. The stretch at Val-256–Met-291 is one FG-GAP 3; atypical repeat. Residues Asn-351, Asn-369, and Asn-480 are each glycosylated (N-linked (GlcNAc...) asparagine). Residues Val-565–Ile-585 form a helical membrane-spanning segment.

Belongs to the TIP family. In terms of assembly, interacts with RUVBL1, RUVBL2 and alpha-tubulin.

It is found in the secreted. Its subcellular location is the membrane. Functionally, modulator of T-cell function. Has a protective effect in graft versus host disease model. In Mus musculus (Mouse), this protein is T-cell immunomodulatory protein.